Here is a 518-residue protein sequence, read N- to C-terminus: Putative malate dehydrogenase 1B (518 aa).

Belongs to the LDH/MDH superfamily. MDH type 2 family.

In Homo sapiens (Human), this protein is Putative malate dehydrogenase 1B (MDH1B).